The primary structure comprises 53 residues: UPF0391 membrane protein msr4317 (53 aa).

Transmembrane regions (helical) follow at residues 4-24 (WIII…PALA) and 33-53 (ILIG…FAVT).

Belongs to the UPF0391 family.

The protein resides in the cell membrane. This is UPF0391 membrane protein msr4317 from Mesorhizobium japonicum (strain LMG 29417 / CECT 9101 / MAFF 303099) (Mesorhizobium loti (strain MAFF 303099)).